We begin with the raw amino-acid sequence, 315 residues long: MSSPEVGKKIIVTVPSTTANLGPGFDCLGAALDLYNEFIFTRIDGGRDRFDLIMESTDGNHLRGGPENLVFRAAQKVWESANIKPFALEARVKLAVPPARGLGSSATAIVAGLIGANAIMNSPLPKEKLLELAIDIEGHPDNVVPSLLGGLCLTARSSSQRWRIIRCDWHDSIKTVVAIPAIRLSTSEARRVMPKNVPISDAVTNMGALTLLLNGLKTGNDELIKEGMFDKLHEPYRWKLIKGGLEVKDAALQAGALGCAISGAGPSILALCKKDKGREVSQAMVKAWENSGVASRAPYLNVQTTGSQFRDISGK.

ATP is bound at residue 97–107 (PPARGLGSSAT).

Belongs to the GHMP kinase family. Homoserine kinase subfamily.

It localises to the cytoplasm. It carries out the reaction L-homoserine + ATP = O-phospho-L-homoserine + ADP + H(+). The protein operates within amino-acid biosynthesis; L-threonine biosynthesis; L-threonine from L-aspartate: step 4/5. Its function is as follows. Catalyzes the ATP-dependent phosphorylation of L-homoserine to L-homoserine phosphate. The sequence is that of Homoserine kinase from Prochlorococcus marinus subsp. pastoris (strain CCMP1986 / NIES-2087 / MED4).